The primary structure comprises 271 residues: Formamidopyrimidine-DNA glycosylase (271 aa).

The Schiff-base intermediate with DNA role is filled by proline 2. Residue glutamate 3 is the Proton donor of the active site. Lysine 58 acts as the Proton donor; for beta-elimination activity in catalysis. DNA is bound by residues histidine 91, arginine 110, and arginine 152. The FPG-type zinc finger occupies arginine 237 to arginine 271. Residue arginine 261 is the Proton donor; for delta-elimination activity of the active site.

This sequence belongs to the FPG family. In terms of assembly, monomer. The cofactor is Zn(2+).

It catalyses the reaction Hydrolysis of DNA containing ring-opened 7-methylguanine residues, releasing 2,6-diamino-4-hydroxy-5-(N-methyl)formamidopyrimidine.. The enzyme catalyses 2'-deoxyribonucleotide-(2'-deoxyribose 5'-phosphate)-2'-deoxyribonucleotide-DNA = a 3'-end 2'-deoxyribonucleotide-(2,3-dehydro-2,3-deoxyribose 5'-phosphate)-DNA + a 5'-end 5'-phospho-2'-deoxyribonucleoside-DNA + H(+). In terms of biological role, involved in base excision repair of DNA damaged by oxidation or by mutagenic agents. Acts as a DNA glycosylase that recognizes and removes damaged bases. Has a preference for oxidized purines, such as 7,8-dihydro-8-oxoguanine (8-oxoG). Has AP (apurinic/apyrimidinic) lyase activity and introduces nicks in the DNA strand. Cleaves the DNA backbone by beta-delta elimination to generate a single-strand break at the site of the removed base with both 3'- and 5'-phosphates. This is Formamidopyrimidine-DNA glycosylase from Thioalkalivibrio sulfidiphilus (strain HL-EbGR7).